We begin with the raw amino-acid sequence, 598 residues long: Nuclear receptor subfamily 4 group A member 2 (598 aa).

A disordered region spans residues 1–22 (MPCVQAQYGSSPQGASPASQGY). Residues 7-18 (QYGSSPQGASPA) are compositionally biased toward polar residues. Positions 260 to 335 (EGLCAVCGDN…VGMVKEVVRT (76 aa)) form a DNA-binding region, nuclear receptor. 2 consecutive NR C4-type zinc fingers follow at residues 263–283 (CAVC…CEGC) and 299–318 (CLAN…CQYC). The Bipartite nuclear localization signal (NLS1) signature appears at 287–314 (FKRTVQKNAKYVCLANKNCPVDKRRRNR). The interval 337–361 (SLKGRRGRLPSKPKSPQEPSPPSPP) is disordered. The Nuclear localization signal (NLS1) motif lies at 338–350 (LKGRRGRLPSKPK). Residues 352-361 (PQEPSPPSPP) are compositionally biased toward pro residues. In terms of domain architecture, NR LBD spans 360–595 (PPVSLISALV…AIIDKLFLDT (236 aa)). Positions 443–452 (FLELFVLRLA) match the nuclear export sequence (NES1) motif. Positions 568-577 (QGLQRIFYLK) match the nuclear export sequence (NES2) motif.

It belongs to the nuclear hormone receptor family. In terms of assembly, interacts with SFPQ, NCOR2, SIN3A and HADC1. The interaction with NCOR2 increases in the absence of PITX3. Interacts with PER2.

The protein localises to the cytoplasm. It localises to the nucleus. Functionally, transcriptional regulator which is important for the differentiation and maintenance of meso-diencephalic dopaminergic (mdDA) neurons during development. It is crucial for expression of a set of genes such as SLC6A3, SLC18A2, TH and DRD2 which are essential for development of mdDA neurons. The polypeptide is Nuclear receptor subfamily 4 group A member 2 (NR4A2) (Pongo abelii (Sumatran orangutan)).